A 273-amino-acid chain; its full sequence is MPAETWRLLDTGVSDPYTNMAIDEAILLEHREGKTPPTLRFYAWSPPTISLGYFQQLEKEIDLEAVKERGLGLVRRLTGGRAVLHDDEVTYSVVAREDHPLMIGGIRPSYLRLAKALAAGLRELGAPVEIASGRKGGREEHTTAACFDAPSWYEITCGGRKLVGSAQTRKGGVVLQHGSIVLTLNGDDLFAVLKMPSEAVRQRLLAKFYHQACGLEEVLGRRVEAGVIKENIVRAFTRLYAVEFVPGGLTEGEKGRLKELRAKYAAADWLKRR.

The BPL/LPL catalytic domain maps to 33-244 (GKTPPTLRFY…AFTRLYAVEF (212 aa)). The active-site Acyl-thioester intermediate is Cys-146.

The protein belongs to the octanoyltransferase LipM family. As to quaternary structure, monomer.

The catalysed reaction is octanoyl-[ACP] + L-lysyl-[protein] = N(6)-octanoyl-L-lysyl-[protein] + holo-[ACP] + H(+). Its pathway is protein modification; protein lipoylation via endogenous pathway; protein N(6)-(lipoyl)lysine from octanoyl-[acyl-carrier-protein]. Functionally, catalyzes the transfer of endogenously produced octanoic acid from octanoyl-acyl-carrier-protein onto the lipoyl domain of GcvH, an intermediate carrier during protein lipoylation. The protein is Octanoyltransferase LipM of Moorella thermoacetica (strain ATCC 39073 / JCM 9320).